We begin with the raw amino-acid sequence, 215 residues long: Ribose-5-phosphate isomerase A (215 aa).

Substrate contacts are provided by residues 26 to 29 (TGST), 79 to 82 (DGAD), and 92 to 95 (KGGG). Catalysis depends on Glu-101, which acts as the Proton acceptor. A substrate-binding site is contributed by Lys-119.

The protein belongs to the ribose 5-phosphate isomerase family. In terms of assembly, homodimer.

The enzyme catalyses aldehydo-D-ribose 5-phosphate = D-ribulose 5-phosphate. It functions in the pathway carbohydrate degradation; pentose phosphate pathway; D-ribose 5-phosphate from D-ribulose 5-phosphate (non-oxidative stage): step 1/1. In terms of biological role, catalyzes the reversible conversion of ribose-5-phosphate to ribulose 5-phosphate. In Xanthomonas oryzae pv. oryzae (strain MAFF 311018), this protein is Ribose-5-phosphate isomerase A.